We begin with the raw amino-acid sequence, 207 residues long: ATP-dependent Clp protease proteolytic subunit (207 aa).

Residue serine 112 is the Nucleophile of the active site. Histidine 137 is a catalytic residue.

It belongs to the peptidase S14 family. In terms of assembly, fourteen ClpP subunits assemble into 2 heptameric rings which stack back to back to give a disk-like structure with a central cavity, resembling the structure of eukaryotic proteasomes.

Its subcellular location is the cytoplasm. The enzyme catalyses Hydrolysis of proteins to small peptides in the presence of ATP and magnesium. alpha-casein is the usual test substrate. In the absence of ATP, only oligopeptides shorter than five residues are hydrolyzed (such as succinyl-Leu-Tyr-|-NHMec, and Leu-Tyr-Leu-|-Tyr-Trp, in which cleavage of the -Tyr-|-Leu- and -Tyr-|-Trp bonds also occurs).. Functionally, cleaves peptides in various proteins in a process that requires ATP hydrolysis. Has a chymotrypsin-like activity. Plays a major role in the degradation of misfolded proteins. The chain is ATP-dependent Clp protease proteolytic subunit from Bacteroides fragilis (strain ATCC 25285 / DSM 2151 / CCUG 4856 / JCM 11019 / LMG 10263 / NCTC 9343 / Onslow / VPI 2553 / EN-2).